The following is a 724-amino-acid chain: Disks large homolog 4 (724 aa).

S-palmitoyl cysteine attachment occurs at residues Cys-3 and Cys-5. The interval 15–35 (QDEDTPPLEHSPAHLPNQANS) is disordered. 2 PDZ domains span residues 65–151 (EITL…VMRR) and 160–246 (EIKL…VAKP). Residues Ser-73 and Ser-142 each carry the phosphoserine modification. Tyr-240 is modified (phosphotyrosine). Ser-295 carries the post-translational modification Phosphoserine. Residues 313 to 393 (RIVIHRGSTG…QTVTIIAQYK (81 aa)) form the PDZ 3 domain. 2 positions are modified to phosphoserine: Ser-415 and Ser-418. Thr-420 bears the Phosphothreonine mark. 4 positions are modified to phosphoserine: Ser-422, Ser-425, Ser-449, and Ser-480. An SH3 domain is found at 428–498 (KRGFYIRALF…PSKRRVERRE (71 aa)). In terms of domain architecture, Guanylate kinase-like spans 534-709 (ARPIIILGPT…IYHKVKRVIE (176 aa)). Tyr-580 is subject to Phosphotyrosine. Ser-606 and Ser-654 each carry phosphoserine. Phosphotyrosine is present on Tyr-715.

Belongs to the MAGUK family. As to quaternary structure, interacts through its PDZ domains with ANO2 and NETO1. Interacts through its first two PDZ domains with GRIN2A, GRIN2B, GRIN2C, GRIN2D. Interacts with ASIC3. Interacts with SEMA4C. Interacts with CXADR. Interacts with KCND2. Interacts with SYNGAP1. Interacts with LRRC4 and LRRC4B. Interacts with ERBB4. Interacts with KCNA1, KCNA2, KCNA3 and KCNA4. Interacts through its first PDZ domain with GRIK2, KCNA4 and CRIPT. Interacts through its second PDZ domain with the PDZ domain of NOS1 or the C-terminus of CAPON. Interacts through its third PDZ domain with NLGN1 and CRIPT, and probably with NLGN2 and NLGN3. Interacts through its guanylate kinase-like domain with KIF13B. Interacts through its guanylate kinase-like domain with DLGAP1/GKAP, DLGAP2, DLGAP3, DLGAP4, MAP1A, BEGAIN and SIPA1L1. Isoform 2 interacts through an L27 domain with HGS/HRS and the first L27 domain of CASK. Interacts with ADR1B and ANKS1B. May interact with HTR2A. Interacts with ADAM22. Interacts with KLHL17 and LGI1. Interacts with FRMPD4 (via C-terminus). Interacts with LRFN1, LRFN2 and LRFN4. Interacts (via N-terminal tandem pair of PDZ domains) with GPER1 (via C-terminus tail motif); the interaction is direct and induces the increase of GPER1 protein levels residing at the plasma membrane surface in a estradiol-independent manner. Interacts (via N-terminus tandem pair of PDZ domains) with NOS1 (via N-terminal domain). Interacts with SHANK3. Interacts with KCNJ4. Interacts with GPR85. Interacts with CACNG2 and MPP2 (via the SH3-Guanylate kinase-like sub-module). Interacts with ADGRB1. Found in a complex with PRR7 and GRIN1. Interacts (via PDZ3 domain and to lesser degree via PDZ2 domain) with PRR7. Component of the postsynaptic hippocampal AMPA-type glutamate receptor (AMPAR) complex, at least composed of pore forming AMPAR subunits GRIA1, GRIA2 and GRIA3 and AMPAR auxiliary proteins SHISA6 and SHISA7. Interacts (via its first two PDZ domains) with SHISA6 and SHISA7 (via PDZ-binding motif); the interaction is direct. Interacts with RPH3A and GRIN2A; this ternary complex regulates NMDA receptor composition at postsynaptic membranes. Interacts with ABR and BCR. Interacts with DGKI (via PDZ-binding motif); controls the localization of DGKI to the synapse. Interacts with C9orf72, SMCR8 and RAB39B. Interacts with ZDHHC5. Interacts with PTEN (via PDZ domain-binding motif); the interaction is induced by NMDA and is required for PTEN location at postsynaptic density. Found in a complex with GRIA1, GRIA2, GRIA3, GRIA4, CACNG8 and CNIH2. Interacts with FAM81A; the interaction facilitates condensate formation via liquid-liquid phase separation. Interacts with ADGRL3. Interacts with SORCS3. In terms of processing, palmitoylated. Palmitoylation is required for targeting to postsynaptic density, plasma membrane and synapses. Palmitoylation by ZDHHC2 occurs when the synaptic activity decreases and induces DLG4 synaptic clustering. Palmitoylation by ZDHHC15 regulates trafficking to the postsynaptic density and function in synaptogenesis. Palmitoylation may play a role in glutamate receptor GRIA1 synapse clustering. Depalmitoylated by ABHD17A and ABHD17B and to a lesser extent by ABHD17C, ABHD12, ABHD13, LYPLA1 and LYPLA2. Undergoes rapid synaptic palmitoylation/depalmitoylation cycles during neuronal development which slow down in mature neurons. Ubiquitinated by MDM2 in response to NMDA receptor activation, leading to proteasome-mediated degradation of DLG4 which is required for AMPA receptor endocytosis. Brain.

The protein localises to the cell membrane. It localises to the postsynaptic density. The protein resides in the synapse. Its subcellular location is the cytoplasm. It is found in the cell projection. The protein localises to the axon. It localises to the dendritic spine. The protein resides in the dendrite. Its subcellular location is the presynapse. Functionally, postsynaptic scaffolding protein that plays a critical role in synaptogenesis and synaptic plasticity by providing a platform for the postsynaptic clustering of crucial synaptic proteins. Interacts with the cytoplasmic tail of NMDA receptor subunits and shaker-type potassium channels. Required for synaptic plasticity associated with NMDA receptor signaling. Overexpression or depletion of DLG4 changes the ratio of excitatory to inhibitory synapses in hippocampal neurons. May reduce the amplitude of ASIC3 acid-evoked currents by retaining the channel intracellularly. May regulate the intracellular trafficking of ADR1B. Also regulates AMPA-type glutamate receptor (AMPAR) immobilization at postsynaptic density keeping the channels in an activated state in the presence of glutamate and preventing synaptic depression. Under basal conditions, cooperates with FYN to stabilize palmitoyltransferase ZDHHC5 at the synaptic membrane through FYN-mediated phosphorylation of ZDHHC5 and its subsequent inhibition of association with endocytic proteins. The polypeptide is Disks large homolog 4 (Homo sapiens (Human)).